A 170-amino-acid polypeptide reads, in one-letter code: Lipoprotein signal peptidase (170 aa).

Transmembrane regions (helical) follow at residues 13-33 (IFIS…VKYI), 72-92 (LFFL…ALKE), and 96-113 (IARI…GNII). Active-site residues include Asp124 and Asp146. The chain crosses the membrane as a helical span at residues 142-162 (FNFADSYVVIGITLFIIYDLF).

This sequence belongs to the peptidase A8 family.

The protein resides in the cell inner membrane. The catalysed reaction is Release of signal peptides from bacterial membrane prolipoproteins. Hydrolyzes -Xaa-Yaa-Zaa-|-(S,diacylglyceryl)Cys-, in which Xaa is hydrophobic (preferably Leu), and Yaa (Ala or Ser) and Zaa (Gly or Ala) have small, neutral side chains.. The protein operates within protein modification; lipoprotein biosynthesis (signal peptide cleavage). This protein specifically catalyzes the removal of signal peptides from prolipoproteins. The polypeptide is Lipoprotein signal peptidase (Borrelia turicatae (strain 91E135)).